Here is a 107-residue protein sequence, read N- to C-terminus: Metallothionein-1 (107 aa).

The propeptide occupies 1-2; sequence MD.

This sequence belongs to the metallothionein superfamily. Type 7 family.

Its function is as follows. The metallothioneins are involved in the cellular sequestration of toxic metal ions. Binds 12 cadmium ions per molecule. The chain is Metallothionein-1 from Tetrahymena pyriformis.